The primary structure comprises 476 residues: Scopoletin glucosyltransferase (476 aa).

The active-site Proton acceptor is the histidine 16. Position 16 (histidine 16) interacts with an anthocyanidin. Aspartate 119 (charge relay) is an active-site residue. Alanine 343, glutamine 345, histidine 360, tryptophan 363, asparagine 364, serine 365, and glutamate 368 together coordinate UDP-alpha-D-glucose. Alanine 383 lines the an anthocyanidin pocket. UDP-alpha-D-glucose contacts are provided by glutamate 384 and glutamine 385.

It belongs to the UDP-glycosyltransferase family.

It catalyses the reaction scopoletin + UDP-alpha-D-glucose = scopolin + UDP + H(+). Glucosyltransferase acting preferentially on aromatic substrates of the phenylpropanoid types. The best substrates are scopoletin and esculetin. Required for full resistance to virus. This chain is Scopoletin glucosyltransferase (TOGT1), found in Nicotiana tabacum (Common tobacco).